Consider the following 215-residue polypeptide: Small ribosomal subunit protein uS5 (215 aa).

Over residues 1–11 (MTDSSPQSNPN) the composition is skewed to polar residues. The segment at 1–61 (MTDSSPQSNP…GQDRDSEWQE (61 aa)) is disordered. Low complexity predominate over residues 12–28 (AVPGAADVPAAAQGQQQ). The segment covering 39 to 61 (RGDRRGDRRGGRRGQDRDSEWQE) has biased composition (basic and acidic residues). In terms of domain architecture, S5 DRBM spans 59-122 (WQERVVQIRR…ADGKKHLVKV (64 aa)).

It belongs to the universal ribosomal protein uS5 family. As to quaternary structure, part of the 30S ribosomal subunit. Contacts proteins S4 and S8.

Functionally, with S4 and S12 plays an important role in translational accuracy. Located at the back of the 30S subunit body where it stabilizes the conformation of the head with respect to the body. This Synechococcus sp. (strain CC9902) protein is Small ribosomal subunit protein uS5.